An 856-amino-acid polypeptide reads, in one-letter code: DNA mismatch repair protein MutS (856 aa).

607–614 (GPNMSGKS) is a binding site for ATP.

This sequence belongs to the DNA mismatch repair MutS family.

In terms of biological role, this protein is involved in the repair of mismatches in DNA. It is possible that it carries out the mismatch recognition step. This protein has a weak ATPase activity. The protein is DNA mismatch repair protein MutS of Lactobacillus delbrueckii subsp. bulgaricus (strain ATCC BAA-365 / Lb-18).